A 360-amino-acid polypeptide reads, in one-letter code: NAD(P)H-quinone oxidoreductase subunit 1, chloroplastic (360 aa).

8 helical membrane-spanning segments follow: residues 30-50, 98-118, 127-147, 165-185, 203-223, 248-268, 297-317, and 340-360; these read FLPI…LVWL, FSIG…VIPF, FNIG…GLLM, AAQS…ISLL, FWGW…ISSL, YSGI…LISS, IFGT…FLFI, and FLLP…VFSL.

It belongs to the complex I subunit 1 family. As to quaternary structure, NDH is composed of at least 16 different subunits, 5 of which are encoded in the nucleus.

Its subcellular location is the plastid. It localises to the chloroplast thylakoid membrane. The enzyme catalyses a plastoquinone + NADH + (n+1) H(+)(in) = a plastoquinol + NAD(+) + n H(+)(out). The catalysed reaction is a plastoquinone + NADPH + (n+1) H(+)(in) = a plastoquinol + NADP(+) + n H(+)(out). Functionally, NDH shuttles electrons from NAD(P)H:plastoquinone, via FMN and iron-sulfur (Fe-S) centers, to quinones in the photosynthetic chain and possibly in a chloroplast respiratory chain. The immediate electron acceptor for the enzyme in this species is believed to be plastoquinone. Couples the redox reaction to proton translocation, and thus conserves the redox energy in a proton gradient. The polypeptide is NAD(P)H-quinone oxidoreductase subunit 1, chloroplastic (Aethionema grandiflorum (Persian stone-cress)).